The primary structure comprises 156 residues: Small ribosomal subunit protein uS7 (156 aa).

It belongs to the universal ribosomal protein uS7 family. Part of the 30S ribosomal subunit. Contacts proteins S9 and S11.

Functionally, one of the primary rRNA binding proteins, it binds directly to 16S rRNA where it nucleates assembly of the head domain of the 30S subunit. Is located at the subunit interface close to the decoding center, probably blocks exit of the E-site tRNA. This is Small ribosomal subunit protein uS7 from Janthinobacterium sp. (strain Marseille) (Minibacterium massiliensis).